Consider the following 714-residue polypeptide: Solute carrier family 12 member 8 (714 aa).

6 helical membrane-spanning segments follow: residues 37 to 60 (VLFG…VLFL), 72 to 93 (LLGM…LSGI), 99 to 116 (SSIG…VLGG), 123 to 142 (GLLY…TGFA), 154 to 173 (IWAV…GINL), and 185 to 205 (LLLF…FTHL). Asparagine 221 carries an N-linked (GlcNAc...) asparagine glycan. The next 5 helical transmembrane spans lie at 233–254 (FFTV…FNMG), 266–289 (LGSL…LGAI), 309–331 (GFLF…LYGA), 360–377 (PVAA…FVFV), and 383–403 (LAPI…YSYF). 2 disordered regions span residues 471-503 (KLES…TLQD) and 530-550 (GQES…PEGT). Residues 533–548 (SCWNKQTSKSEGTQPE) show a composition bias toward polar residues. The next 2 helical transmembrane spans lie at 593–616 (CNPW…QWVY) and 622–643 (GVAA…LGSA).

The protein belongs to the SLC12A transporter family. In terms of tissue distribution, ubiquitous with very low level in normal skin.

The protein localises to the membrane. Cation/chloride cotransporter that may play a role in the control of keratinocyte proliferation. The chain is Solute carrier family 12 member 8 (SLC12A8) from Homo sapiens (Human).